A 434-amino-acid chain; its full sequence is Solute carrier RCH1 (434 aa).

The Cytoplasmic portion of the chain corresponds to Met-1–Ser-15. The chain crosses the membrane as a helical span at residues Val-16–Ala-36. Over Arg-37–Lys-50 the chain is Extracellular. Residues Gly-51 to Met-71 form a helical membrane-spanning segment. The Cytoplasmic segment spans residues Lys-72 to Ala-87. The helical transmembrane segment at Thr-88–Val-108 threads the bilayer. Over Lys-109–Asp-118 the chain is Extracellular. The helical transmembrane segment at Trp-119–Ile-139 threads the bilayer. Over Met-140–Leu-149 the chain is Cytoplasmic. Residues Leu-150–Val-170 traverse the membrane as a helical segment. The Extracellular portion of the chain corresponds to Gln-171–Lys-199. Residues Gln-200–Pro-220 traverse the membrane as a helical segment. The Cytoplasmic segment spans residues Lys-221–His-234. The helical transmembrane segment at Ile-235–Tyr-255 threads the bilayer. Residues Gln-256–His-264 are Extracellular-facing. The chain crosses the membrane as a helical span at residues Val-265–Ser-285. Residues Tyr-286–Asp-327 lie on the Cytoplasmic side of the membrane. Residues Ala-328 to Thr-348 form a helical membrane-spanning segment. The Extracellular segment spans residues Ser-349 to Leu-362. A helical membrane pass occupies residues Val-363–Phe-383. Residues Lys-384–Arg-434 lie on the Cytoplasmic side of the membrane. Ser-425 is subject to Phosphoserine.

The protein belongs to the bile acid:sodium symporter (BASS) (TC 2.A.28) family.

It is found in the cell membrane. Its subcellular location is the bud neck. Functionally, solute carrier protein that negatively regulates the cytosolic calcium homeostasis in response to high levels of extracellular calcium. In Saccharomyces cerevisiae (strain ATCC 204508 / S288c) (Baker's yeast), this protein is Solute carrier RCH1.